Here is a 687-residue protein sequence, read N- to C-terminus: Glycine--tRNA ligase beta subunit (687 aa).

It belongs to the class-II aminoacyl-tRNA synthetase family. Tetramer of two alpha and two beta subunits.

Its subcellular location is the cytoplasm. It catalyses the reaction tRNA(Gly) + glycine + ATP = glycyl-tRNA(Gly) + AMP + diphosphate. The polypeptide is Glycine--tRNA ligase beta subunit (Neisseria meningitidis serogroup C / serotype 2a (strain ATCC 700532 / DSM 15464 / FAM18)).